The sequence spans 239 residues: tRNA (guanine-N(7)-)-methyltransferase (239 aa).

S-adenosyl-L-methionine-binding residues include glutamate 69, glutamate 94, aspartate 121, and aspartate 144. Aspartate 144 is a catalytic residue. Residue lysine 148 participates in substrate binding. Residues 150–155 (RHNKRR) form an interaction with RNA region. Substrate contacts are provided by residues aspartate 180 and 217–220 (TKFE).

Belongs to the class I-like SAM-binding methyltransferase superfamily. TrmB family. In terms of assembly, monomer.

The catalysed reaction is guanosine(46) in tRNA + S-adenosyl-L-methionine = N(7)-methylguanosine(46) in tRNA + S-adenosyl-L-homocysteine. It participates in tRNA modification; N(7)-methylguanine-tRNA biosynthesis. In terms of biological role, catalyzes the formation of N(7)-methylguanine at position 46 (m7G46) in tRNA. In Yersinia pestis (strain Pestoides F), this protein is tRNA (guanine-N(7)-)-methyltransferase.